The following is an 843-amino-acid chain: Protein P (843 aa).

The segment at 1-177 is terminal protein domain (TP); sequence MPLSYQHFRK…FCGSPYSWEQ (177 aa). The tract at residues 178–346 is spacer; the sequence is ELQHGRLFFK…YCLSHIVNLL (169 aa). Positions 248-272 are disordered; that stretch reads HPTTRQSFGVEPSGSGHIDNSASNS. A polymerase/reverse transcriptase domain (RT) region spans residues 347-690; it reads EDWGPCTENG…YLNLYPVARQ (344 aa). The region spanning 357–600 is the Reverse transcriptase domain; the sequence is EHNIRIPRTP…YSLNFMGYVI (244 aa). Residues Asp429, Asp551, and Asp552 each contribute to the Mg(2+) site.

Belongs to the hepadnaviridae P protein family.

It catalyses the reaction DNA(n) + a 2'-deoxyribonucleoside 5'-triphosphate = DNA(n+1) + diphosphate. It carries out the reaction Endonucleolytic cleavage to 5'-phosphomonoester.. Its activity is regulated as follows. Activated by host HSP70 and HSP40 in vitro to be able to bind the epsilon loop of the pgRNA. Because deletion of the RNase H region renders the protein partly chaperone-independent, the chaperones may be needed indirectly to relieve occlusion of the RNA-binding site by this domain. Inhibited by several reverse-transcriptase inhibitors: Lamivudine, Adefovir and Entecavir. Functionally, multifunctional enzyme that converts the viral RNA genome into dsDNA in viral cytoplasmic capsids. This enzyme displays a DNA polymerase activity that can copy either DNA or RNA templates, and a ribonuclease H (RNase H) activity that cleaves the RNA strand of RNA-DNA heteroduplexes in a partially processive 3'- to 5'-endonucleasic mode. Neo-synthesized pregenomic RNA (pgRNA) are encapsidated together with the P protein, and reverse-transcribed inside the nucleocapsid. Initiation of reverse-transcription occurs first by binding the epsilon loop on the pgRNA genome, and is initiated by protein priming, thereby the 5'-end of (-)DNA is covalently linked to P protein. Partial (+)DNA is synthesized from the (-)DNA template and generates the relaxed circular DNA (RC-DNA) genome. After budding and infection, the RC-DNA migrates in the nucleus, and is converted into a plasmid-like covalently closed circular DNA (cccDNA). The activity of P protein does not seem to be necessary for cccDNA generation, and is presumably released from (+)DNA by host nuclear DNA repair machinery. This chain is Protein P, found in Homo sapiens (Human).